The primary structure comprises 118 residues: IgW heavy chain V region W26 (118 aa).

Residues 1 to 109 (NIVLTQPESA…PQWGYWGSGT (109 aa)) form the Ig-like domain. Residues cysteine 22 and cysteine 93 are joined by a disulfide bond.

As to expression, expressed mainly in lymphoid tissues including spleen, epigonal organ and circulating lymphocytes.

The protein is IgW heavy chain V region W26 of Heterodontus francisci (Horn shark).